A 492-amino-acid chain; its full sequence is KAT8 regulatory NSL complex subunit 2 (492 aa).

Lysine 78 participates in a covalent cross-link: Glycyl lysine isopeptide (Lys-Gly) (interchain with G-Cter in SUMO2). A disordered region spans residues 126-182 (ELGSQTPESSRSEASRILDEDSWSDGEQEPITVDQTWRGDPDSEADSIDRDQEDPLK). Threonine 131 carries the post-translational modification Phosphothreonine. Residues 135–144 (SRSEASRILD) are compositionally biased toward basic and acidic residues. A phosphoserine mark is found at serine 147, serine 149, serine 168, and serine 172. The span at 162 to 182 (WRGDPDSEADSIDRDQEDPLK) shows a compositional bias: basic and acidic residues. Residues 308 to 364 (DVRCSNQSLPMTRHCLTHICQDTNRVLFKCCQGSEEVPCNKPVPVSLSEDPCCPLHF) are required for interaction with other NSL complex members. The disordered stretch occupies residues 453 to 492 (QMAGDGCRSQGPRNSEKAPAPLSQSGIATANGKPEPTSVS).

In terms of assembly, component of the NSL complex at least composed of KAT8/MOF, KANSL1, KANSL2, KANSL3, MCRS1, PHF20, OGT1/OGT, WDR5 and HCFC1. Ubiquitously expressed.

Its subcellular location is the nucleus. The protein localises to the mitochondrion. In terms of biological role, non-catalytic component of the NSL histone acetyltransferase complex, a multiprotein complex that mediates histone H4 acetylation at 'Lys-5'- and 'Lys-8' (H4K5ac and H4K8ac) at transcription start sites and promotes transcription initiation. Required for NSL complex stability and for transcription of intraciliary transport genes in both ciliated and non-ciliated cells by regulating histone H4 acetylation at 'Lys-5'- and 'Lys-12' (H4K5ac and H4K12ac). This is necessary for cilium assembly in ciliated cells and for organization of the microtubule cytoskeleton in non-ciliated cells. Required within the NSL complex to maintain nuclear architecture stability by promoting KAT8-mediated acetylation of lamin LMNA. This is KAT8 regulatory NSL complex subunit 2 (KANSL2) from Capra hircus (Goat).